A 90-amino-acid polypeptide reads, in one-letter code: C-C motif chemokine 4 homolog (90 aa).

Positions 1–21 (MKVSVAALAVLLIAICYQTSA) are cleaved as a signal peptide. 2 disulfides stabilise this stretch: Cys32-Cys56 and Cys33-Cys72.

The protein belongs to the intercrine beta (chemokine CC) family. In terms of assembly, homodimer.

The protein resides in the secreted. Its function is as follows. Monokine with inflammatory and chemokinetic properties. The sequence is that of C-C motif chemokine 4 homolog (CCL4) from Gallus gallus (Chicken).